The primary structure comprises 226 residues: Methylamine utilization ferredoxin-type protein MauM (226 aa).

4Fe-4S ferredoxin-type domains lie at P59–W87, T95–T127, V136–I172, and Q180–R211. 16 residues coordinate [4Fe-4S] cluster: C67, C70, C73, C77, C105, C108, C113, C117, C145, C153, C156, C160, C189, C192, C195, and C199.

It functions in the pathway one-carbon metabolism; methylamine degradation. Involved in electron transfer. The protein is Methylamine utilization ferredoxin-type protein MauM (mauM) of Methylophilus methylotrophus (Bacterium W3A1).